A 577-amino-acid polypeptide reads, in one-letter code: Serine/threonine-protein kinase AGC1-5 (577 aa).

Residues 1 to 12 show a composition bias toward polar residues; the sequence is MDLASKKNTANV. Residues 1–151 are disordered; the sequence is MDLASKKNTA…DYAYGDNLVG (151 aa). Positions 44-55 are enriched in basic and acidic residues; the sequence is PHFDPKKMDPLV. Polar residues-rich tracts occupy residues 69–87 and 110–120; these read TRGTNSEGDLKHNTYSSDG and LTTSETYSPSA. A Protein kinase domain is found at 185 to 509; sequence FRLLKRLGYG…ATEIKQHPFF (325 aa). Residues 191-199 and Lys-214 each bind ATP; that span reads LGYGDIGSV. The active-site Proton acceptor is the Asp-310. The AGC-kinase C-terminal domain occupies 510-577; it reads EGVNWALVRS…DTAYIDFEYF (68 aa).

Belongs to the protein kinase superfamily. AGC Ser/Thr protein kinase family. In terms of assembly, interacts with PDPK1/PDK1. Autophosphorylated and phosphorylated by PDPK1/PDK1. As to expression, specifically expressed in pollen grains.

The enzyme catalyses L-seryl-[protein] + ATP = O-phospho-L-seryl-[protein] + ADP + H(+). The catalysed reaction is L-threonyl-[protein] + ATP = O-phospho-L-threonyl-[protein] + ADP + H(+). Activated by PDPK1/PDK1. Its function is as follows. Functions redudantly with AGC1-7 as signaling component in the pollen tube. Required for polarized growth of pollen tubes. In Arabidopsis thaliana (Mouse-ear cress), this protein is Serine/threonine-protein kinase AGC1-5.